The sequence spans 956 residues: MEEFVIPVFSERDIPYSLLNHYPLAIQIDVKVDDEGGKHNLIKIPESDMIDVPRLSIIEALNYRPKRNDGVVVPRLLDITLRAYDNRKSAKNAKGVEFMTDTKWMKWAIDDKMDIQPLKVTLDNHCSVNHQLFNCIVKARSANADTIYYDYYPLENGAKRCNHTNLDLLRSLTTTEMFHILQGAAYALKTTYELVAHSERENMSESYQVGTQRWIQLRKGTKIGYRGQPYERFISSLVQVIIKGKIPDEIRTEIAELNRIKDEWKNAAYDRTEIRALELCKILSAIGRKMLDVQEEPKDEMALSTRFQFKLDEKFIRTDQEHVNIFKVGGSATDDGRFYALIAIAGTDTQQGRVWRTNPYPCLRGALIAAECELGDVYFTLRQTYKWSLRPEYGQRERPLEDNKYVFARLNLFDTNLAVGDEIIHWRYEVYQPKETTHDDGYICVSQKGDDELLCEVDEDRYKEMFDRMIQGGWDQERFKLHNILTEPNLLTIDFEKDAYLGARSELVFPPYYDKWINSPMFNARLKIARGEIATWKADDPWSNRAVHGYIKTSAESLEYALGPYYDLRLQLFGDTLSLGQRQSAVFEHMAQQDDFSTLTDYTKGRTVCPHSGGTFYTFRKVALIILSNYERLDPSLHEGREHETYMHPAVNDVFRRHVLEMKDFSQLICFVFDYIFEKHVQLRNAKEARRIIYLIQNTSGAYRLDVLREAFPNFLKHVMNLRDVKRICDLNVINFFPLLFLVQDNISYWHRQWSIPMILFDQVIRLIPVEVGAYANRFGLKSFFNFIRFHPGDSKKRQDADDTHKEFGSICFEYYTTTKISQGEIDVPVVTSKLDTLKLHVASLCAGLADSLVYTLPVAHPKKSIVLIIVGDDKLEPQIRSEQIVNKYYYSRRHISGVVSICVNQGGQLKVHSMGITRHRICDKSILKYKCKVVLVRMPGHVFGNDELMTKLLNV.

The protein belongs to the orbivirus VP2 family.

The protein localises to the virion. The VP2 protein is one of the two proteins (with VP5) which constitute the virus particle outer capsid. It is the major target of the host immunogenic response. Responsible for viral attachment to target host cell, probably by binding to sialic acid. This attachment induces virion internalization predominantly through clathrin-dependent endocytosis. The polypeptide is Outer capsid protein VP2 (Segment-2) (Bluetongue virus 10 (isolate USA) (BTV 10)).